A 740-amino-acid chain; its full sequence is MYVVHVEMSPEAIATQKPYLDLGLTEAEYDRFAELIGHQPNDTEIGLASGMWSEHCAYKYSKPVLRQFWTKNERVLMGPGEGAGVIDIGEGKAVVFKAESHNHPSAVEPYEGAATGVGGIIRDIFSIGAKPVAMLDSLAFGDIEQPHTQHLVDRIVAGIGGYGNAIGIPTVGGETNFDGSYTRNPLVNAMCVGIMDKDQIQKGKAAGVGNALIYVGAKTGRDGINGASFASGDFSDEEAADRSAVQVGDPFMEKLLMDACLEITGHHQEALVGIQDMGAAGLVSSSVEMAGKANSGMVLDLDLIPQREAEMTPFEIMLSESQERMLLCVRAGFEQEVLAVFADYDLDAAIVGHVIAGHQYQLYHHGKLVCDVPVSSLTDDAPIYHQQGKMPKRLAQPAADFDPIITDPVQIWTDMMAMPTIADKSSLYKRYDAQVQTNTVVLPGSDAAVIRIRGTHRALAMTTDSKDVTCILIAGGCGNECWLKRARNLVASGAEPLGITDCLNFGDPTKPEAFYELAEAAKGIIAATKAFNAPVISGNVSLYNETNGEAIYPTPMIGMVGLIEDLSTITTAAFKQADDLIYLVGETHGDFNGSELQKLQTGEVTGKLFDFDLEAEKQHQHFVLKAIREHLITAAHDLSDGGLLVALAEMGFDAQLGAQINVTLPTAWGFSETQGRFLLTVSPENQAAFEALHGPAQLIGRVQAPPEFEVTTVNQHFSASLQQLQTAFEEALPCHMNQKA.

Residue histidine 55 is part of the active site. The ATP site is built by tyrosine 58 and lysine 97. Residue glutamate 99 participates in Mg(2+) binding. Substrate contacts are provided by residues 100-103 (SHNH) and arginine 122. Residue histidine 101 is the Proton acceptor of the active site. A Mg(2+)-binding site is contributed by aspartate 123. Residue glutamine 246 coordinates substrate. Aspartate 276 contributes to the Mg(2+) binding site. 320-322 (ESQ) provides a ligand contact to substrate. Residues aspartate 501 and glycine 538 each coordinate ATP. Mg(2+) is bound at residue asparagine 539. Residue serine 541 participates in substrate binding.

Belongs to the FGAMS family. As to quaternary structure, monomer. Part of the FGAM synthase complex composed of 1 PurL, 1 PurQ and 2 PurS subunits.

The protein localises to the cytoplasm. It catalyses the reaction N(2)-formyl-N(1)-(5-phospho-beta-D-ribosyl)glycinamide + L-glutamine + ATP + H2O = 2-formamido-N(1)-(5-O-phospho-beta-D-ribosyl)acetamidine + L-glutamate + ADP + phosphate + H(+). The protein operates within purine metabolism; IMP biosynthesis via de novo pathway; 5-amino-1-(5-phospho-D-ribosyl)imidazole from N(2)-formyl-N(1)-(5-phospho-D-ribosyl)glycinamide: step 1/2. Its function is as follows. Part of the phosphoribosylformylglycinamidine synthase complex involved in the purines biosynthetic pathway. Catalyzes the ATP-dependent conversion of formylglycinamide ribonucleotide (FGAR) and glutamine to yield formylglycinamidine ribonucleotide (FGAM) and glutamate. The FGAM synthase complex is composed of three subunits. PurQ produces an ammonia molecule by converting glutamine to glutamate. PurL transfers the ammonia molecule to FGAR to form FGAM in an ATP-dependent manner. PurS interacts with PurQ and PurL and is thought to assist in the transfer of the ammonia molecule from PurQ to PurL. In Lacticaseibacillus casei (Lactobacillus casei), this protein is Phosphoribosylformylglycinamidine synthase subunit PurL.